The chain runs to 173 residues: ATP synthase subunit delta (173 aa).

This sequence belongs to the ATPase delta chain family. In terms of assembly, F-type ATPases have 2 components, F(1) - the catalytic core - and F(0) - the membrane proton channel. F(1) has five subunits: alpha(3), beta(3), gamma(1), delta(1), epsilon(1). F(0) has three main subunits: a(1), b(2) and c(10-14). The alpha and beta chains form an alternating ring which encloses part of the gamma chain. F(1) is attached to F(0) by a central stalk formed by the gamma and epsilon chains, while a peripheral stalk is formed by the delta and b chains.

It localises to the cell inner membrane. In terms of biological role, f(1)F(0) ATP synthase produces ATP from ADP in the presence of a proton or sodium gradient. F-type ATPases consist of two structural domains, F(1) containing the extramembraneous catalytic core and F(0) containing the membrane proton channel, linked together by a central stalk and a peripheral stalk. During catalysis, ATP synthesis in the catalytic domain of F(1) is coupled via a rotary mechanism of the central stalk subunits to proton translocation. Its function is as follows. This protein is part of the stalk that links CF(0) to CF(1). It either transmits conformational changes from CF(0) to CF(1) or is implicated in proton conduction. This chain is ATP synthase subunit delta, found in Campylobacter jejuni subsp. jejuni serotype O:6 (strain 81116 / NCTC 11828).